The primary structure comprises 196 residues: Molybdopterin synthase catalytic subunit (196 aa).

Residues 110–111 (HR), Lys-126, and 133–135 (KKE) contribute to the substrate site. The tract at residues 142–196 (GGIWRANRDGAVGERVDEDEEKKKPDMGPHGPILRPSRPGERGHGPVVRNHQLGS) is disordered. Residues 147–168 (ANRDGAVGERVDEDEEKKKPDM) are compositionally biased toward basic and acidic residues.

It belongs to the MoaE family. MOCS2B subfamily. In terms of assembly, heterotetramer; composed of 2 small (MOCS2A) and 2 large (MOCS2B) subunits.

The protein localises to the cytoplasm. It catalyses the reaction 2 [molybdopterin-synthase sulfur-carrier protein]-C-terminal-Gly-aminoethanethioate + cyclic pyranopterin phosphate + H2O = molybdopterin + 2 [molybdopterin-synthase sulfur-carrier protein]-C-terminal Gly-Gly + 2 H(+). Its pathway is cofactor biosynthesis; molybdopterin biosynthesis. Functionally, catalytic subunit of the molybdopterin synthase complex, a complex that catalyzes the conversion of precursor Z into molybdopterin. Acts by mediating the incorporation of 2 sulfur atoms from thiocarboxylated MOCS2A into precursor Z to generate a dithiolene group. The polypeptide is Molybdopterin synthase catalytic subunit (Sclerotinia sclerotiorum (strain ATCC 18683 / 1980 / Ss-1) (White mold)).